The primary structure comprises 104 residues: DNA-directed RNA polymerase subunit omega (104 aa).

Belongs to the RNA polymerase subunit omega family. The RNAP catalytic core consists of 2 alpha, 1 beta, 1 beta' and 1 omega subunit. When a sigma factor is associated with the core the holoenzyme is formed, which can initiate transcription.

The catalysed reaction is RNA(n) + a ribonucleoside 5'-triphosphate = RNA(n+1) + diphosphate. In terms of biological role, promotes RNA polymerase assembly. Latches the N- and C-terminal regions of the beta' subunit thereby facilitating its interaction with the beta and alpha subunits. The chain is DNA-directed RNA polymerase subunit omega from Streptococcus thermophilus (strain CNRZ 1066).